Here is a 290-residue protein sequence, read N- to C-terminus: 33 kDa chaperonin (290 aa).

2 disulfide bridges follow: Cys-235–Cys-237 and Cys-268–Cys-271.

Belongs to the HSP33 family. In terms of processing, under oxidizing conditions two disulfide bonds are formed involving the reactive cysteines. Under reducing conditions zinc is bound to the reactive cysteines and the protein is inactive.

The protein resides in the cytoplasm. Its function is as follows. Redox regulated molecular chaperone. Protects both thermally unfolding and oxidatively damaged proteins from irreversible aggregation. Plays an important role in the bacterial defense system toward oxidative stress. The sequence is that of 33 kDa chaperonin from Streptococcus pneumoniae (strain CGSP14).